Consider the following 936-residue polypeptide: Protocadherin gamma-A10 (936 aa).

A signal peptide spans Met-1–Ala-32. Cadherin domains lie at Arg-33–Phe-137, Gln-138–Phe-246, Thr-247–Leu-351, Thr-352–Phe-456, Ser-457–Ile-566, and Asp-574–Asn-687. At Arg-33–Tyr-696 the chain is on the extracellular side. Asn-51 carries an N-linked (GlcNAc...) asparagine glycan. N-linked (GlcNAc...) asparagine glycans are attached at residues Asn-423 and Asn-549. Residues Leu-697–Ala-717 traverse the membrane as a helical segment. The Cytoplasmic portion of the chain corresponds to Leu-718–Lys-936. 2 disordered regions span residues Ser-801–Asn-845 and Ala-906–Lys-936. Polar residues predominate over residues Trp-820–Asn-845. Basic residues predominate over residues Asn-926–Lys-936.

Its subcellular location is the cell membrane. Its function is as follows. Potential calcium-dependent cell-adhesion protein. May be involved in the establishment and maintenance of specific neuronal connections in the brain. The protein is Protocadherin gamma-A10 (PCDHGA10) of Pan troglodytes (Chimpanzee).